The following is a 210-amino-acid chain: Outer-membrane lipoprotein LolB (210 aa).

An N-terminal signal peptide occupies residues Met1–Gly29. Cys30 carries the N-palmitoyl cysteine lipid modification. Cys30 is lipidated: S-diacylglycerol cysteine.

Belongs to the LolB family. Monomer.

It is found in the cell outer membrane. In terms of biological role, plays a critical role in the incorporation of lipoproteins in the outer membrane after they are released by the LolA protein. The sequence is that of Outer-membrane lipoprotein LolB from Coxiella burnetii (strain RSA 493 / Nine Mile phase I).